The sequence spans 71 residues: Large ribosomal subunit protein uL29 (71 aa).

The protein belongs to the universal ribosomal protein uL29 family. In terms of assembly, part of the 50S ribosomal subunit. Interacts with protein L23.

In terms of biological role, stabilizes the tertiary rRNA structure within the 23S rRNA domain (domain I) to which it binds. Located at the polypeptide exit tunnel on the outside of the subunit. In Haloarcula marismortui (strain ATCC 43049 / DSM 3752 / JCM 8966 / VKM B-1809) (Halobacterium marismortui), this protein is Large ribosomal subunit protein uL29 (rpl29).